A 389-amino-acid chain; its full sequence is Trans-2-enoyl-CoA reductase [NADH] (389 aa).

Residues 47 to 52 (GASTGY), 73 to 74 (FE), 110 to 111 (DA), and 138 to 139 (LA) each bind NAD(+). Position 224 (tyrosine 224) interacts with substrate. Tyrosine 234 acts as the Proton donor in catalysis. NAD(+)-binding positions include lysine 243 and 272–274 (LVT).

This sequence belongs to the TER reductase family. Monomer.

The enzyme catalyses a 2,3-saturated acyl-CoA + NAD(+) = a (2E)-enoyl-CoA + NADH + H(+). It participates in lipid metabolism; fatty acid biosynthesis. Its function is as follows. Involved in the fatty acid synthesis (FAS II). Catalyzes the reduction of a carbon-carbon double bond in an enoyl moiety that is covalently linked to a coenzyme A (CoA). This is Trans-2-enoyl-CoA reductase [NADH] from Clostridium perfringens (strain SM101 / Type A).